A 204-amino-acid polypeptide reads, in one-letter code: Prephenate decarboxylase (204 aa).

It belongs to the prephenate decarboxylase family.

The protein resides in the cytoplasm. It carries out the reaction prephenate + H(+) = 3-[(4R)-4-hydroxycyclohexa-1,5-dien-1-yl]-2-oxopropanoate + CO2. Its pathway is antibiotic biosynthesis; bacilysin biosynthesis. Its function is as follows. Part of the bacABCDEF operon responsible for the biosynthesis of the nonribosomally synthesized dipeptide antibiotic bacilysin, composed of L-alanine and L-anticapsin. Bacilysin is an irreversible inactivator of the glutaminase domain of glucosamine synthetase. BacA is an unusual prephenate decarboxylase that avoids the typical aromatization of the cyclohexadienol ring of prephenate. BacA catalyzes the protonation of prephenate (1-carboxy-4-hydroxy-alpha-oxo-2,5-cyclohexadiene-1-propanoic acid) at C6 position, followed by a decarboxylation to produce the endocyclic-delta(4),delta(8)-7R-dihydro-hydroxyphenylpyruvate (en-H2HPP). En-H2HPP is able to undergo a slow nonenzymatic isomerization to produce the exocyclic-delta(3),delta(5)-dihydro-hydroxyphenylpyruvate (ex-H2HPP). BacA isomerizes only the pro-R double bond in prephenate. The chain is Prephenate decarboxylase from Bacillus subtilis (strain 168).